The primary structure comprises 739 residues: Polyphosphate kinase (739 aa).

The interval 22 to 45 is disordered; that stretch reads WHSDNSALAAPPAATTSASQDQLP. Over residues 27–40 the composition is skewed to low complexity; the sequence is SALAAPPAATTSAS. Asparagine 87 serves as a coordination point for ATP. Residues arginine 428 and arginine 458 each coordinate Mg(2+). Histidine 488 (phosphohistidine intermediate) is an active-site residue. Tyrosine 521, arginine 621, and histidine 649 together coordinate ATP. The tract at residues 714–739 is disordered; it reads QWTASPQKGQQVRDHQESLMERHRSR. Over residues 724-739 the composition is skewed to basic and acidic residues; it reads QVRDHQESLMERHRSR.

Belongs to the polyphosphate kinase 1 (PPK1) family. The cofactor is Mg(2+). In terms of processing, an intermediate of this reaction is the autophosphorylated ppk in which a phosphate is covalently linked to a histidine residue through a N-P bond.

The enzyme catalyses [phosphate](n) + ATP = [phosphate](n+1) + ADP. In terms of biological role, catalyzes the reversible transfer of the terminal phosphate of ATP to form a long-chain polyphosphate (polyP). This is Polyphosphate kinase from Mycobacterium leprae (strain TN).